A 190-amino-acid chain; its full sequence is Guanylate kinase (190 aa).

Positions 8 to 188 (GRLVILAGPS…AVSAIKAVLL (181 aa)) constitute a Guanylate kinase-like domain. 15–22 (GPSAVGKS) is an ATP binding site.

Belongs to the guanylate kinase family.

It localises to the cytoplasm. It catalyses the reaction GMP + ATP = GDP + ADP. In terms of biological role, essential for recycling GMP and indirectly, cGMP. The protein is Guanylate kinase of Corynebacterium efficiens (strain DSM 44549 / YS-314 / AJ 12310 / JCM 11189 / NBRC 100395).